The chain runs to 208 residues: Guanylate kinase (208 aa).

A Guanylate kinase-like domain is found at 5–184 (GLLIVFSGPS…AAERVKCVIE (180 aa)). Residue 12-19 (GPSGVGKG) coordinates ATP.

This sequence belongs to the guanylate kinase family.

It is found in the cytoplasm. The catalysed reaction is GMP + ATP = GDP + ADP. Its function is as follows. Essential for recycling GMP and indirectly, cGMP. This chain is Guanylate kinase, found in Streptococcus pneumoniae serotype 4 (strain ATCC BAA-334 / TIGR4).